The sequence spans 262 residues: pFDCC methylesterase MES16 (262 aa).

Residue S87 is the Acyl-ester intermediate of the active site. Catalysis depends on charge relay system residues D211 and H239.

Belongs to the AB hydrolase superfamily. Methylesterase family.

Its subcellular location is the cytoplasm. It carries out the reaction methyl (indol-3-yl)acetate + H2O = (indol-3-yl)acetate + methanol + H(+). It catalyses the reaction methyl (-)-jasmonate + H2O = jasmonate + methanol + H(+). The enzyme catalyses primary fluorescent dioxobilin-type chlorophyll catabolite + H2O = O13(4)-desmethyl pFDCC + methanol + H(+). Its pathway is plant hormone biosynthesis. The protein operates within lipid metabolism; oxylipin biosynthesis. It functions in the pathway porphyrin-containing compound metabolism; chlorophyll degradation. Functionally, involved in the chlorophyll breakdown by its action in fluorescent chlorophyll catabolites (FCCs) demethylation. Demethylates the C13(2)-carboxymethyl group present at the isocyclic ring of chlorophyll. Uses primary fluorescent dioxobilin-type chlorophyll catabolite (pFDCC) as substrate to produce O13(4)-desmethyl pFDCC. Also able to catalyze pheophorbides in vitro. Methylesterase shown to have carboxylesterase activity, methyl indole-3-acetic acid (MeIAA) esterase activity and methyl jasmonate (MeJA) esterase activity in vitro. In Arabidopsis thaliana (Mouse-ear cress), this protein is pFDCC methylesterase MES16.